A 221-amino-acid polypeptide reads, in one-letter code: Imidazoleglycerol-phosphate dehydratase (221 aa).

The protein belongs to the imidazoleglycerol-phosphate dehydratase family.

It carries out the reaction D-erythro-1-(imidazol-4-yl)glycerol 3-phosphate = 3-(imidazol-4-yl)-2-oxopropyl phosphate + H2O. It functions in the pathway amino-acid biosynthesis; L-histidine biosynthesis; L-histidine from 5-phospho-alpha-D-ribose 1-diphosphate: step 6/9. The chain is Imidazoleglycerol-phosphate dehydratase (HIS3) from Kluyveromyces lactis (strain ATCC 8585 / CBS 2359 / DSM 70799 / NBRC 1267 / NRRL Y-1140 / WM37) (Yeast).